A 73-amino-acid chain; its full sequence is Long neurotoxin 3 (73 aa).

Intrachain disulfides connect cysteine 3/cysteine 21, cysteine 14/cysteine 42, cysteine 27/cysteine 31, cysteine 46/cysteine 57, and cysteine 58/cysteine 63.

This sequence belongs to the three-finger toxin family. Long-chain subfamily. Type II alpha-neurotoxin sub-subfamily. As to expression, expressed by the venom gland.

The protein resides in the secreted. Functionally, binds with high affinity to muscular (alpha-1/CHRNA1) and neuronal (alpha-7/CHRNA7) nicotinic acetylcholine receptor (nAChR) and inhibits acetylcholine from binding to the receptor, thereby impairing neuromuscular and neuronal transmission. The protein is Long neurotoxin 3 of Ophiophagus hannah (King cobra).